We begin with the raw amino-acid sequence, 141 residues long: HTH-type transcriptional repressor NsrR (141 aa).

The HTH rrf2-type domain occupies 2–129 (QLTSFTDYGL…DNYTLADLVE (128 aa)). The segment at residues 28–51 (ISEVTDVYGVSRNHMVKIINQLSR) is a DNA-binding region (H-T-H motif). Positions 91, 96, and 102 each coordinate [2Fe-2S] cluster.

[2Fe-2S] cluster is required as a cofactor.

Its function is as follows. Nitric oxide-sensitive repressor of genes involved in protecting the cell against nitrosative stress. May require iron for activity. This chain is HTH-type transcriptional repressor NsrR, found in Escherichia coli O127:H6 (strain E2348/69 / EPEC).